The primary structure comprises 142 residues: Large ribosomal subunit protein uL11 (142 aa).

This sequence belongs to the universal ribosomal protein uL11 family. In terms of assembly, part of the ribosomal stalk of the 50S ribosomal subunit. Interacts with L10 and the large rRNA to form the base of the stalk. L10 forms an elongated spine to which L12 dimers bind in a sequential fashion forming a multimeric L10(L12)X complex. Post-translationally, one or more lysine residues are methylated.

Forms part of the ribosomal stalk which helps the ribosome interact with GTP-bound translation factors. The chain is Large ribosomal subunit protein uL11 from Methylocella silvestris (strain DSM 15510 / CIP 108128 / LMG 27833 / NCIMB 13906 / BL2).